A 137-amino-acid chain; its full sequence is Large ribosomal subunit protein uL13 (137 aa).

Belongs to the universal ribosomal protein uL13 family. In terms of assembly, part of the 50S ribosomal subunit.

Its function is as follows. This protein is one of the early assembly proteins of the 50S ribosomal subunit, although it is not seen to bind rRNA by itself. It is important during the early stages of 50S assembly. In Methanocaldococcus jannaschii (strain ATCC 43067 / DSM 2661 / JAL-1 / JCM 10045 / NBRC 100440) (Methanococcus jannaschii), this protein is Large ribosomal subunit protein uL13.